A 22-amino-acid chain; its full sequence is Protein YncP (22 aa).

This is Protein YncP from Escherichia coli (strain K12).